A 726-amino-acid chain; its full sequence is MGALQWLSITAAAASAVSALTPEQMIGAPRRTEVIPNPSGDTGLFSTSQWSFDTHSESTWWSLIDLESGETTTLTDDSDIEEIIWLGSDSSTLLYINSTNAQVPGGVELWIADSSDFANYKAASLSAGFLGIKSTVTDSGDVHFILRGKSYPNGTAYNDQLAETYPSTARIYDSIFVRHWDTYLTTASHAVFSGTLQSSTSDDGNVQYTSSGGLTNLVNPVKGAESPFPPFGGNDDYDLSPDGKWVTFKSKAPELPLANNTAAYVYLVPHDGSATAFAVNGPDSPATPEGVEGESNNPVFSPDSDKIAYFQMATNTYESDRNVLYVYSIADDTITPLAKDWDRSPSSVTWVDGDNLVVASQDLGRTRLFAIPGDAGTTSSPRTFTDGGSVSAQYVLSNSTLLVTSSAFWTSWSVYTASPDEGVINTLASANEIDPELSGLSSSDFEEFYFDGNWTTLQGWITYPQDFDSSKKYPLAFLIHGGPEDAWADEWNLKWHSKVFADQGYVVVQPNPTGSTGFGQQLTDAIQLNWTAGAAYDDLTKAWQYVHDTYDFIDTDNGVAAGPSFGAFMITWIQGDDFGRKFKALVSHDGPFIGDAWVETDELWFVEHEFNGTFWQARDAFHNTDPSGPSRVLAYSTPQLVIHSDKDYRIPVANGIGLFNTLQERGVPSRFLNFPDEDHWVTGQENSLVWYQQVLGWINRYSGVGGSNPDAIALEDTVNPVVDLNP.

Positions 1–19 (MGALQWLSITAAAASAVSA) are cleaved as a signal peptide. 6 N-linked (GlcNAc...) asparagine glycosylation sites follow: Asn-97, Asn-153, Asn-259, Asn-398, Asn-453, and Asn-529. Ser-564 acts as the Charge relay system in catalysis. A glycan (N-linked (GlcNAc...) asparagine) is linked at Asn-611. Residues Asp-647 and His-679 each act as charge relay system in the active site.

It belongs to the peptidase S9C family.

The protein resides in the secreted. Extracellular dipeptidyl-peptidase which removes N-terminal dipeptides sequentially from polypeptides having unsubstituted N-termini. This is Probable dipeptidyl-peptidase 5 (dpp5) from Aspergillus niger.